A 153-amino-acid polypeptide reads, in one-letter code: Prostaglandin E synthase (153 aa).

Over 1-13 the chain is Lumenal; it reads MPSPGLVMESGQV. Residues 14–42 form a helical membrane-spanning segment; the sequence is LPAFLLCSTLLVIKMYAVAVITGQMRLRK. Position 39 (R39) interacts with glutathione. Topologically, residues 43–61 are cytoplasmic; sequence KAFANPEDALKRGGLQYYR. A helical transmembrane segment spans residues 62–91; that stretch reads SDPDVERCLRAHRNDMETIYPFLFLGFVYS. 74–78 is a glutathione binding site; sequence RNDME. The Lumenal segment spans residues 92–96; it reads FLGPN. A helical membrane pass occupies residues 97-120; the sequence is PLIAWIHFLVVLTGRVVHTVAYLG. 2 residues coordinate glutathione: H114 and Y118. The Cytoplasmic portion of the chain corresponds to 121–124; that stretch reads KLNP. Residues 125–153 traverse the membrane as a helical segment; sequence RLRSGAYVLAQFSCFSMALQILWEVAHHL. Residue 127–131 participates in glutathione binding; it reads RSGAY.

Belongs to the MAPEG family. Homotrimer. Glutathione serves as cofactor.

It is found in the membrane. The protein localises to the cytoplasm. The protein resides in the perinuclear region. The enzyme catalyses prostaglandin H2 = prostaglandin E2. It carries out the reaction 2-glyceryl-prostaglandin H2 = 2-glyceryl-prostaglandin E2. It catalyses the reaction prostaglandin G2 = (15S)-15-hydroperoxy-prostaglandin E2. The catalysed reaction is 1-chloro-2,4-dinitrobenzene + glutathione = 2,4-dinitrophenyl-S-glutathione + chloride + H(+). The enzyme catalyses (5S)-hydroperoxy-(6E,8Z,11Z,14Z)-eicosatetraenoate + 2 glutathione = (5S)-hydroxy-(6E,8Z,11Z,14Z)-eicosatetraenoate + glutathione disulfide + H2O. It participates in lipid metabolism; prostaglandin biosynthesis. With respect to regulation, activity is increased markedly in macrophages and osteoblasts following pro-inflammatory stimuli. Its function is as follows. Terminal enzyme of the cyclooxygenase (COX)-2-mediated prostaglandin E2 (PGE2) biosynthetic pathway. Catalyzes the glutathione-dependent oxidoreduction of prostaglandin endoperoxide H2 (PGH2) to prostaglandin E2 (PGE2) in response to inflammatory stimuli. Plays a key role in inflammation response, fever and pain. Also catalyzes the oxidoreduction of endocannabinoids into prostaglandin glycerol esters and PGG2 into 15-hydroperoxy-PGE2. In addition, displays low glutathione transferase and glutathione-dependent peroxidase activities, toward 1-chloro-2,4-dinitrobenzene and 5-hydroperoxyicosatetraenoic acid (5-HPETE), respectively. In Mus musculus (Mouse), this protein is Prostaglandin E synthase (Ptges).